The following is a 235-amino-acid chain: Ubiquinone biosynthesis O-methyltransferase (235 aa).

4 residues coordinate S-adenosyl-L-methionine: Arg-40, Gly-60, Asp-81, and Met-125.

This sequence belongs to the methyltransferase superfamily. UbiG/COQ3 family.

It carries out the reaction a 3-demethylubiquinol + S-adenosyl-L-methionine = a ubiquinol + S-adenosyl-L-homocysteine + H(+). It catalyses the reaction a 3-(all-trans-polyprenyl)benzene-1,2-diol + S-adenosyl-L-methionine = a 2-methoxy-6-(all-trans-polyprenyl)phenol + S-adenosyl-L-homocysteine + H(+). It functions in the pathway cofactor biosynthesis; ubiquinone biosynthesis. Functionally, O-methyltransferase that catalyzes the 2 O-methylation steps in the ubiquinone biosynthetic pathway. This is Ubiquinone biosynthesis O-methyltransferase from Nitrosomonas europaea (strain ATCC 19718 / CIP 103999 / KCTC 2705 / NBRC 14298).